The following is a 234-amino-acid chain: Carboxy-S-adenosyl-L-methionine synthase (234 aa).

S-adenosyl-L-methionine contacts are provided by residues Tyr-35, 60–62, 83–84, and Arg-191; these read GCS and DN.

Belongs to the class I-like SAM-binding methyltransferase superfamily. Cx-SAM synthase family. In terms of assembly, homodimer.

The enzyme catalyses prephenate + S-adenosyl-L-methionine = carboxy-S-adenosyl-L-methionine + 3-phenylpyruvate + H2O. Functionally, catalyzes the conversion of S-adenosyl-L-methionine (SAM) to carboxy-S-adenosyl-L-methionine (Cx-SAM). In Campylobacter lari (strain RM2100 / D67 / ATCC BAA-1060), this protein is Carboxy-S-adenosyl-L-methionine synthase.